The sequence spans 174 residues: Gamma-crystallin D (174 aa).

Beta/gamma crystallin 'Greek key' domains follow at residues 2-40 (GKIT…RVDS) and 41-83 (GCWM…RIIP). A connecting peptide region spans residues 84–87 (YSGS). 2 consecutive Beta/gamma crystallin 'Greek key' domains span residues 88-128 (HKMR…NVLD) and 129-171 (GCWI…RRVI).

It belongs to the beta/gamma-crystallin family. As to quaternary structure, monomer.

Functionally, crystallins are the dominant structural components of the vertebrate eye lens. This chain is Gamma-crystallin D (CRYGD), found in Macropus fuliginosus (Western gray kangaroo).